The following is a 416-amino-acid chain: MTESGPLENMLAQMEQAREYVDIDDGIYERLKSPERTLSVSLPVRMDDGSVEVFDAYRCQFDSARGPYKGGIRYHPTVSEEEVSALAGWMTWKTALVDLPFGGAKGGIVCNPKELSDNEIEQLTRRYTEGIRRMIGPETDIPAPDMNTDPRTMAWVMDTYSVYQGYAVPEVVTGKPPEIGGTDGRVEATGRGVSIITEETFEYFDTDIQDADVAIQGFGNVGSVTADLLSERGANIVAVSDVTGAIHDPTGLDIADVQAYADANGGRLEGYDAEPISNDDLLTLDVDALIPAAIEDVITVDVAERLAADVIVEAANGPTTFDAAQVLSDRGVPVVPDILANAGGVIVSYLEWVQNSQQYSWDVEEVNRDLRQRLTGAFDEMLVAYEDRNIPTLRTAAYTIALERSADAHEFRGLFP.

Lysine 105 is a catalytic residue.

Belongs to the Glu/Leu/Phe/Val dehydrogenases family. Homohexamer.

This is Glutamate dehydrogenase A2 (gdhA2) from Halobacterium salinarum (strain ATCC 700922 / JCM 11081 / NRC-1) (Halobacterium halobium).